Here is an 88-residue protein sequence, read N- to C-terminus: Cell division topological specificity factor (88 aa).

The protein belongs to the MinE family.

In terms of biological role, prevents the cell division inhibition by proteins MinC and MinD at internal division sites while permitting inhibition at polar sites. This ensures cell division at the proper site by restricting the formation of a division septum at the midpoint of the long axis of the cell. The chain is Cell division topological specificity factor from Shewanella denitrificans (strain OS217 / ATCC BAA-1090 / DSM 15013).